Reading from the N-terminus, the 81-residue chain is ATP synthase subunit c, chloroplastic (81 aa).

Helical transmembrane passes span 3–23 and 57–77; these read PLIA…ASIG and LAFM…LLFA.

It belongs to the ATPase C chain family. In terms of assembly, F-type ATPases have 2 components, F(1) - the catalytic core - and F(0) - the membrane proton channel. F(1) has five subunits: alpha(3), beta(3), gamma(1), delta(1), epsilon(1). F(0) has four main subunits: a(1), b(1), b'(1) and c(10-14). The alpha and beta chains form an alternating ring which encloses part of the gamma chain. F(1) is attached to F(0) by a central stalk formed by the gamma and epsilon chains, while a peripheral stalk is formed by the delta, b and b' chains.

It localises to the plastid. The protein localises to the chloroplast thylakoid membrane. Functionally, f(1)F(0) ATP synthase produces ATP from ADP in the presence of a proton or sodium gradient. F-type ATPases consist of two structural domains, F(1) containing the extramembraneous catalytic core and F(0) containing the membrane proton channel, linked together by a central stalk and a peripheral stalk. During catalysis, ATP synthesis in the catalytic domain of F(1) is coupled via a rotary mechanism of the central stalk subunits to proton translocation. In terms of biological role, key component of the F(0) channel; it plays a direct role in translocation across the membrane. A homomeric c-ring of between 10-14 subunits forms the central stalk rotor element with the F(1) delta and epsilon subunits. This Chaetosphaeridium globosum (Charophycean green alga) protein is ATP synthase subunit c, chloroplastic.